Here is a 451-residue protein sequence, read N- to C-terminus: PTS system galactose-specific EIIC component (451 aa).

Residues 8–427 (LNKTLMPLAS…VLNVLIYYPF (420 aa)) form the PTS EIIC type-3 domain. Transmembrane regions (helical) follow at residues 40 to 60 (LGIALLTIIGYFPVPAWVDFL), 69 to 89 (FSAVIGAVTSALAIYVTYNFA), 104 to 124 (GLLSIASLLMLMPQIITVPVV), 151 to 171 (TGSTGLIVAIIIGFIVSLVYI), 190 to 210 (VVDSLSPAIISMVIFCLMFGI), 239 to 259 (ANPWVLMGIFTFGNFLWFFGI), 263 to 283 (LIGGILNPLLLTMSYANIDAY), 296 to 316 (IVFAVGANAWGGSGNTYGLVI), 332 to 352 (LGAIPSIFNISEPLLFGLPMM), 356 to 376 (LFFIPLVFQPAILGTVALGLA), and 403 to 423 (ISGGLPFLIIFAICLVLNVLI).

It is found in the cell membrane. The phosphoenolpyruvate-dependent sugar phosphotransferase system (PTS), a major carbohydrate active transport system, catalyzes the phosphorylation of incoming sugar substrates concomitant with their translocation across the cell membrane. Involved in galactose transport with PtcA and PtcB. This is PTS system galactose-specific EIIC component from Lactococcus lactis subsp. cremoris (strain MG1363).